The following is a 1246-amino-acid chain: Myosin-1 (1246 aa).

Residues 1-41 form a disordered region; it reads MGHSRRPVGGEKKSRGFGRSKAVADVGDGRQTGGKPQVKKA. Positions 51–730 constitute a Myosin motor domain; it reads IGVSDLTLLS…TLFALEAMRD (680 aa). ATP is bound at residue 144–151; that stretch reads GESGAGKT. At Ser-372 the chain carries Phosphoserine. Residues 419–501 are actin-binding; that stretch reads SIGILDIYGF…PGVFAALNDA (83 aa). 2 IQ domains span residues 734 to 754 and 755 to 780; these read HNMA…RIEC and AIRI…QGHK. One can recognise a TH1 domain in the interval 788-976; sequence RRRMSLLGSR…TIHTSAGEPP (189 aa). Over residues 956–970 the composition is skewed to polar residues; sequence GSSNVDTYKSSTIHT. Disordered regions lie at residues 956-1080 and 1127-1246; these read GSSN…PKKP and WTPQ…DDEW. Composition is skewed to pro residues over residues 1033-1045 and 1065-1078; these read APQP…PVPQ and APPP…PAPK. The SH3 domain maps to 1077–1138; that stretch reads PKKPMAKVLY…PQAYLEEQKA (62 aa). Composition is skewed to low complexity over residues 1151 to 1166 and 1214 to 1228; these read TPAT…AKAK and NSAS…LAEA. Over residues 1229 to 1240 the composition is skewed to basic and acidic residues; it reads LRQRQEAMHGKQ.

It belongs to the TRAFAC class myosin-kinesin ATPase superfamily. Myosin family. Phosphorylation of the TEDS site (Ser-372) is required for the polarization of the actin cytoskeleton. Phosphorylation probably activates the myosin-I ATPase activity.

Its subcellular location is the cytoplasm. It is found in the cytoskeleton. The protein localises to the actin patch. In terms of biological role, type-I myosin implicated in the organization of the actin cytoskeleton. Required for proper actin cytoskeleton polarization. At the cell cortex, assembles in patch-like structures together with proteins from the actin-polymerizing machinery and promotes actin assembly. Functions as actin nucleation-promoting factor (NPF) for the Arp2/3 complex. Plays an important role in polarized growth, spore germination, hyphal morphogenesis, and septal wall formation. The sequence is that of Myosin-1 (myoA) from Aspergillus terreus (strain NIH 2624 / FGSC A1156).